The sequence spans 397 residues: UDP-GlcNAc:betaGal beta-1,3-N-acetylglucosaminyltransferase 7 (397 aa).

Residues Met1–Lys6 are Cytoplasmic-facing. Residues Thr7–Gln26 traverse the membrane as a helical; Signal-anchor for type II membrane protein segment. Residues Arg27–Leu397 are Lumenal-facing. N-linked (GlcNAc...) asparagine glycosylation is found at Asn84, Asn90, Asn210, and Asn387.

The protein belongs to the glycosyltransferase 31 family.

The protein localises to the golgi apparatus membrane. It functions in the pathway protein modification; protein glycosylation. N-acetyl glucosamine (GlcNAc) transferase that catalyzes the transfer of GlcNAc via a beta1-&gt;3 linkage from UDP-GlcNAc to the non-reducing terminal galactose (Gal) in the linearly growing chain of N- and O-linked keratan sulfate proteoglycans. Cooperates with B4GALT4 galactosyltransferase and CHST6 and CHST1 sulfotransferases to construct and elongate mono- and disulfated disaccharide units [-&gt;3Galbeta1-&gt;4(6-sulfoGlcNAcbeta)1-&gt;] and [-&gt;3(6-sulfoGalbeta)1-&gt;4(6-sulfoGlcNAcbeta)1-&gt;] within keratan sulfate polymer. Involved in biosynthesis of N-linked keratan sulfate proteoglycans in cornea, with an impact on proteoglycan fibril organization and corneal transparency. May play a role in the maintenance of tissue architecture by suppressing cellular motility and invasion. The sequence is that of UDP-GlcNAc:betaGal beta-1,3-N-acetylglucosaminyltransferase 7 (B3gnt7) from Rattus norvegicus (Rat).